Consider the following 222-residue polypeptide: Probable fimbrial chaperone EcpB (222 aa).

The N-terminal stretch at 1-20 (MKKHLLPLALLFSGISPAQA) is a signal peptide.

This sequence belongs to the EcpB/EcpE family.

Functionally, part of the ecpRABCDE operon, which encodes the E.coli common pilus (ECP). ECP is found in both commensal and pathogenic strains and plays a dual role in early-stage biofilm development and host cell recognition. The protein is Probable fimbrial chaperone EcpB (ecpB) of Escherichia coli (strain K12).